A 159-amino-acid chain; its full sequence is UPF0262 protein TM1040_3562 (159 aa).

Residues 1-21 form a disordered region; it reads MSRISQIELDDRNLPPPTPEI.

This sequence belongs to the UPF0262 family.

The polypeptide is UPF0262 protein TM1040_3562 (Ruegeria sp. (strain TM1040) (Silicibacter sp.)).